The chain runs to 69 residues: UPF0337 protein XAC4007 (69 aa).

Belongs to the UPF0337 (CsbD) family.

The protein is UPF0337 protein XAC4007 of Xanthomonas axonopodis pv. citri (strain 306).